The following is a 504-amino-acid chain: Ribose import ATP-binding protein RbsA (504 aa).

ABC transporter domains are found at residues 6-242 and 252-495; these read LELK…VGRR and VRHG…VGKT. Residue 38-45 participates in ATP binding; that stretch reads GENGAGKS.

This sequence belongs to the ABC transporter superfamily. Ribose importer (TC 3.A.1.2.1) family. As to quaternary structure, the complex is composed of an ATP-binding protein (RbsA), two transmembrane proteins (RbsC) and a solute-binding protein (RbsB).

Its subcellular location is the cell inner membrane. It catalyses the reaction D-ribose(out) + ATP + H2O = D-ribose(in) + ADP + phosphate + H(+). Part of the ABC transporter complex RbsABC involved in ribose import. Responsible for energy coupling to the transport system. This is Ribose import ATP-binding protein RbsA from Photobacterium profundum (strain SS9).